The primary structure comprises 404 residues: Tryptophan synthase beta chain (404 aa).

The residue at position 99 (lysine 99) is an N6-(pyridoxal phosphate)lysine.

The protein belongs to the TrpB family. Tetramer of two alpha and two beta chains. The cofactor is pyridoxal 5'-phosphate.

It catalyses the reaction (1S,2R)-1-C-(indol-3-yl)glycerol 3-phosphate + L-serine = D-glyceraldehyde 3-phosphate + L-tryptophan + H2O. The protein operates within amino-acid biosynthesis; L-tryptophan biosynthesis; L-tryptophan from chorismate: step 5/5. In terms of biological role, the beta subunit is responsible for the synthesis of L-tryptophan from indole and L-serine. This chain is Tryptophan synthase beta chain, found in Rhizobium rhizogenes (strain K84 / ATCC BAA-868) (Agrobacterium radiobacter).